Consider the following 1547-residue polypeptide: Mediator of RNA polymerase II transcription subunit 12 (1547 aa).

Disordered stretches follow at residues 1 to 63 (MTSR…RPHI) and 1356 to 1509 (PVIP…QQRD). Pro residues predominate over residues 1357 to 1369 (VIPPLEPPQPPNP). Residues 1379 to 1390 (YQSPQMTSNTAA) show a composition bias toward polar residues. 2 stretches are compositionally biased toward low complexity: residues 1398–1413 (QQQQ…QQTQ) and 1446–1468 (LSPL…RASQ). 2 stretches are compositionally biased toward polar residues: residues 1469-1480 (PSPIHSQRPTSV) and 1499-1509 (AHTSYVNQQRD).

This sequence belongs to the Mediator complex subunit 12 family. As to quaternary structure, component of the SRB8-11 complex, which itself associates with the Mediator complex.

Its subcellular location is the nucleus. In terms of biological role, component of the SRB8-11 complex. The SRB8-11 complex is a regulatory module of the Mediator complex which is itself involved in regulation of basal and activated RNA polymerase II-dependent transcription. The SRB8-11 complex may be involved in the transcriptional repression of a subset of genes regulated by Mediator. It may inhibit the association of the Mediator complex with RNA polymerase II to form the holoenzyme complex. The polypeptide is Mediator of RNA polymerase II transcription subunit 12 (SRB8) (Phaeosphaeria nodorum (strain SN15 / ATCC MYA-4574 / FGSC 10173) (Glume blotch fungus)).